A 220-amino-acid chain; its full sequence is Antistasin (220 aa).

Positions 1–19 (MNYLFVFLALSAAVTFANA) are cleaved as a signal peptide. Antistasin-like domains lie at 21–46 (CNKI…ICKC), 54–79 (CSNR…ICRC), 91–117 (CDGL…KCEC), 120–145 (CKQF…TCKC), 154–180 (CDDL…KCEC), and 183–208 (CKNF…TCKC).

Belongs to the protease inhibitor I15 (antistasin) family. As to expression, gland cells. It is more strongly expressed in the head than in the gastric tissue.

The protein localises to the secreted. Its function is as follows. This highly disulfide-bonded protein is a potent inhibitor of factor Xa. Facilitates digestion of tissues and may also protect the gastric tissues from its own digestive enzymes. May have therapeutic utility as an anticoagulant. Also exhibits a strong metastatic activity. In Hydra vulgaris (Hydra), this protein is Antistasin.